We begin with the raw amino-acid sequence, 238 residues long: Ribonuclease PH (238 aa).

Phosphate-binding positions include R86 and G124–R126.

Belongs to the RNase PH family. As to quaternary structure, homohexameric ring arranged as a trimer of dimers.

It catalyses the reaction tRNA(n+1) + phosphate = tRNA(n) + a ribonucleoside 5'-diphosphate. Phosphorolytic 3'-5' exoribonuclease that plays an important role in tRNA 3'-end maturation. Removes nucleotide residues following the 3'-CCA terminus of tRNAs; can also add nucleotides to the ends of RNA molecules by using nucleoside diphosphates as substrates, but this may not be physiologically important. Probably plays a role in initiation of 16S rRNA degradation (leading to ribosome degradation) during starvation. The sequence is that of Ribonuclease PH from Haemophilus ducreyi (strain 35000HP / ATCC 700724).